The following is a 205-amino-acid chain: ATP-dependent Clp protease proteolytic subunit (205 aa).

Residue Ser109 is the Nucleophile of the active site. The active site involves His134.

This sequence belongs to the peptidase S14 family. In terms of assembly, fourteen ClpP subunits assemble into 2 heptameric rings which stack back to back to give a disk-like structure with a central cavity, resembling the structure of eukaryotic proteasomes.

The protein localises to the cytoplasm. It carries out the reaction Hydrolysis of proteins to small peptides in the presence of ATP and magnesium. alpha-casein is the usual test substrate. In the absence of ATP, only oligopeptides shorter than five residues are hydrolyzed (such as succinyl-Leu-Tyr-|-NHMec, and Leu-Tyr-Leu-|-Tyr-Trp, in which cleavage of the -Tyr-|-Leu- and -Tyr-|-Trp bonds also occurs).. Functionally, cleaves peptides in various proteins in a process that requires ATP hydrolysis. Has a chymotrypsin-like activity. Plays a major role in the degradation of misfolded proteins. This Baumannia cicadellinicola subsp. Homalodisca coagulata protein is ATP-dependent Clp protease proteolytic subunit.